The chain runs to 459 residues: Sperm microtubule associated protein 2-like (459 aa).

Residues 1–138 (MEEGDFSGSS…QEDGKDDLFP (138 aa)) are disordered. A compositionally biased stretch (low complexity) spans 21–30 (TTTTTETRTT). The segment covering 47-63 (NGDEAEAVGEEGQEEDY) has biased composition (acidic residues). A compositionally biased stretch (basic and acidic residues) spans 64–73 (EGSKTHKSHE). Polar residues predominate over residues 77–87 (SFRSHNSSDPP). Basic and acidic residues-rich tracts occupy residues 91–112 (KASD…KTSD) and 127–136 (ERQEDGKDDL). 8 THEG repeats span residues 172–190 (KKCF…PKKQ), 212–231 (AALK…PRLV), 258–277 (PALV…PNKF), 291–310 (TTRY…AKGT), 327–346 (STLS…PRIK), 367–386 (AALL…SKRV), 403–422 (AATH…PHTR), and 440–459 (SALK…PIVR).

The chain is Sperm microtubule associated protein 2-like from Mus musculus (Mouse).